The sequence spans 385 residues: NifS/IcsS protein homolog (385 aa).

Pyridoxal 5'-phosphate is bound by residues 69 to 70, Asn149, Gln178, and 199 to 201; these read GT and SSH. Position 202 is an N6-(pyridoxal phosphate)lysine (Lys202). Residue Thr237 coordinates pyridoxal 5'-phosphate. Catalysis depends on Cys325, which acts as the Cysteine persulfide intermediate. Cys325 contacts [2Fe-2S] cluster.

Belongs to the class-V pyridoxal-phosphate-dependent aminotransferase family. NifS/IscS subfamily. It depends on pyridoxal 5'-phosphate as a cofactor.

This chain is NifS/IcsS protein homolog, found in Lactobacillus delbrueckii subsp. bulgaricus (strain ATCC 11842 / DSM 20081 / BCRC 10696 / JCM 1002 / NBRC 13953 / NCIMB 11778 / NCTC 12712 / WDCM 00102 / Lb 14).